We begin with the raw amino-acid sequence, 176 residues long: Inorganic pyrophosphatase (176 aa).

K30, R44, and Y56 together coordinate substrate. D66, D71, and D103 together coordinate Mg(2+). Position 140 (Y140) interacts with substrate.

It belongs to the PPase family. Homohexamer. The cofactor is Mg(2+).

The protein resides in the cytoplasm. The enzyme catalyses diphosphate + H2O = 2 phosphate + H(+). Its function is as follows. Catalyzes the hydrolysis of inorganic pyrophosphate (PPi) forming two phosphate ions. This chain is Inorganic pyrophosphatase, found in Methanothermobacter thermautotrophicus (strain ATCC 29096 / DSM 1053 / JCM 10044 / NBRC 100330 / Delta H) (Methanobacterium thermoautotrophicum).